The sequence spans 158 residues: 2-C-methyl-D-erythritol 2,4-cyclodiphosphate synthase (158 aa).

A divalent metal cation contacts are provided by Asp-9 and His-11. 4-CDP-2-C-methyl-D-erythritol 2-phosphate-binding positions include Asp-9–His-11 and His-35–Ser-36. Position 43 (His-43) interacts with a divalent metal cation. Residues Asp-57–Gly-59, Phe-62–Asp-66, Ala-101–Leu-107, Thr-133–Glu-136, Phe-140, and Arg-143 contribute to the 4-CDP-2-C-methyl-D-erythritol 2-phosphate site.

The protein belongs to the IspF family. In terms of assembly, homotrimer. The cofactor is a divalent metal cation.

It carries out the reaction 4-CDP-2-C-methyl-D-erythritol 2-phosphate = 2-C-methyl-D-erythritol 2,4-cyclic diphosphate + CMP. It participates in isoprenoid biosynthesis; isopentenyl diphosphate biosynthesis via DXP pathway; isopentenyl diphosphate from 1-deoxy-D-xylulose 5-phosphate: step 4/6. Its function is as follows. Involved in the biosynthesis of isopentenyl diphosphate (IPP) and dimethylallyl diphosphate (DMAPP), two major building blocks of isoprenoid compounds. Catalyzes the conversion of 4-diphosphocytidyl-2-C-methyl-D-erythritol 2-phosphate (CDP-ME2P) to 2-C-methyl-D-erythritol 2,4-cyclodiphosphate (ME-CPP) with a corresponding release of cytidine 5-monophosphate (CMP). This Bacillus subtilis (strain 168) protein is 2-C-methyl-D-erythritol 2,4-cyclodiphosphate synthase.